Here is an 805-residue protein sequence, read N- to C-terminus: Mitochondrial intermediate peptidase (805 aa).

The N-terminal 25 residues, 1–25, are a transit peptide targeting the mitochondrion; it reads MIQPLVKASRPRLWVCSDCLLRRTL. Residue His578 participates in Zn(2+) binding. Residue Glu579 is part of the active site. Zn(2+) is bound by residues His582 and His585.

The protein belongs to the peptidase M3 family. Zn(2+) is required as a cofactor.

It is found in the mitochondrion matrix. The enzyme catalyses Release of an N-terminal octapeptide as second stage of processing of some proteins imported into the mitochondrion.. Cleaves proteins, imported into the mitochondrion, to their mature size. While most mitochondrial precursor proteins are processed to the mature form in one step by mitochondrial processing peptidase (MPP), the sequential cleavage by MIP of an octapeptide after initial processing by MPP is a required step for a subgroup of nuclear-encoded precursor proteins destined for the matrix or the inner membrane. The chain is Mitochondrial intermediate peptidase (oct-1) from Neurospora crassa (strain ATCC 24698 / 74-OR23-1A / CBS 708.71 / DSM 1257 / FGSC 987).